The chain runs to 399 residues: MQKISKYSSMAILRKRPLVKTETGPESELLPEKRTKIKQEEVVPQPVDIDWVKSLPNKQYFEWIVVRNGNVPNRWATPLDPSILVTPASTKVPYKFQETYARMRVLRSKILAPVDIIGGSSIPVTVASKCGISKEQISPRDYRLQVLLGVMLSSQTKDEVTAMAMLNIMRYCIDELHSEEGMTLEAVLQINETKLDELIHSVGFHTRKAKYILSTCKILQDQFSSDVPATINELLGLPGVGPKMAYLTLQKAWGKIEGICVDVHVDRLTKLWKWVDAQKCKTPDQTRTQLQNWLPKGLWTEINGLLVGFGQIITKSRNLGDMLQFLPPDDPRSSLDWDLQSQLYKEIQQNIMSYPKWVKYLEGKRELNVEAEINVKHEEKTVEETMVKLENDISVKVED.

The N-terminal 26 residues, 1–26 (MQKISKYSSMAILRKRPLVKTETGPE), are a transit peptide targeting the mitochondrion. A Bipartite nuclear localization signal motif is present at residues 14–37 (RKRPLVKTETGPESELLPEKRTKI). K194 participates in a covalent cross-link: Glycyl lysine isopeptide (Lys-Gly) (interchain with G-Cter in SUMO). The HhH domain occupies 223–247 (FSSDVPATINELLGLPGVGPKMAYL). The Nucleophile; for N-glycosylase activity role is filled by K243.

The protein belongs to the Nth/MutY family. In terms of processing, monosumoylated. Sumoylation is associated with targeting of NTG1 to nuclei containing oxidative DNA damage.

It localises to the nucleus. Its subcellular location is the mitochondrion. It carries out the reaction 2'-deoxyribonucleotide-(2'-deoxyribose 5'-phosphate)-2'-deoxyribonucleotide-DNA = a 3'-end 2'-deoxyribonucleotide-(2,3-dehydro-2,3-deoxyribose 5'-phosphate)-DNA + a 5'-end 5'-phospho-2'-deoxyribonucleoside-DNA + H(+). In terms of biological role, bifunctional DNA N-glycosylase with associated apurinic/apyrimidinic (AP) lyase function that catalyzes the first step in base excision repair (BER), the primary repair pathway for the repair of oxidative DNA damage. The DNA N-glycosylase activity releases the damaged DNA base from DNA by cleaving the N-glycosidic bond, leaving an AP site. The AP-lyase activity cleaves the phosphodiester bond 3' to the AP site by a beta-elimination. Primarily recognizes and repairs oxidative base damage of pyrimidines, but also purine-derived lesions, alkylation damage and cytosine photoproducts generated by UV irradiation as well as abasic sites. Also has 8-oxoguanine DNA glycosylase activity. The AP lyase can incise AP sites opposite all four bases. May also play a role in the regulation of mtDNA copy number by introducing a double-stranded break (DSB) at the mtDNA replication origin ori5, initiating the rolling-circle mtDNA replication. This is Endonuclease III homolog 1 from Saccharomyces cerevisiae (strain ATCC 204508 / S288c) (Baker's yeast).